The primary structure comprises 159 residues: Transcription elongation factor GreA (159 aa).

Residues 44–75 adopt a coiled-coil conformation; that stretch reads SENAEYDAAREQQSQTEARIADLESKLSSATI.

It belongs to the GreA/GreB family.

Its function is as follows. Necessary for efficient RNA polymerase transcription elongation past template-encoded arresting sites. The arresting sites in DNA have the property of trapping a certain fraction of elongating RNA polymerases that pass through, resulting in locked ternary complexes. Cleavage of the nascent transcript by cleavage factors such as GreA or GreB allows the resumption of elongation from the new 3'terminus. GreA releases sequences of 2 to 3 nucleotides. This is Transcription elongation factor GreA from Chlorobium phaeovibrioides (strain DSM 265 / 1930) (Prosthecochloris vibrioformis (strain DSM 265)).